We begin with the raw amino-acid sequence, 292 residues long: Phosphatidylserine decarboxylase proenzyme (292 aa).

Active-site charge relay system; for autoendoproteolytic cleavage activity residues include D98, H153, and S254. The active-site Schiff-base intermediate with substrate; via pyruvic acid; for decarboxylase activity is the S254. At S254 the chain carries Pyruvic acid (Ser); by autocatalysis.

Belongs to the phosphatidylserine decarboxylase family. PSD-B subfamily. Prokaryotic type I sub-subfamily. In terms of assembly, heterodimer of a large membrane-associated beta subunit and a small pyruvoyl-containing alpha subunit. The cofactor is pyruvate. Post-translationally, is synthesized initially as an inactive proenzyme. Formation of the active enzyme involves a self-maturation process in which the active site pyruvoyl group is generated from an internal serine residue via an autocatalytic post-translational modification. Two non-identical subunits are generated from the proenzyme in this reaction, and the pyruvate is formed at the N-terminus of the alpha chain, which is derived from the carboxyl end of the proenzyme. The autoendoproteolytic cleavage occurs by a canonical serine protease mechanism, in which the side chain hydroxyl group of the serine supplies its oxygen atom to form the C-terminus of the beta chain, while the remainder of the serine residue undergoes an oxidative deamination to produce ammonia and the pyruvoyl prosthetic group on the alpha chain. During this reaction, the Ser that is part of the protease active site of the proenzyme becomes the pyruvoyl prosthetic group, which constitutes an essential element of the active site of the mature decarboxylase.

It localises to the cell membrane. It catalyses the reaction a 1,2-diacyl-sn-glycero-3-phospho-L-serine + H(+) = a 1,2-diacyl-sn-glycero-3-phosphoethanolamine + CO2. The protein operates within phospholipid metabolism; phosphatidylethanolamine biosynthesis; phosphatidylethanolamine from CDP-diacylglycerol: step 2/2. Its function is as follows. Catalyzes the formation of phosphatidylethanolamine (PtdEtn) from phosphatidylserine (PtdSer). This is Phosphatidylserine decarboxylase proenzyme from Halorhodospira halophila (strain DSM 244 / SL1) (Ectothiorhodospira halophila (strain DSM 244 / SL1)).